We begin with the raw amino-acid sequence, 430 residues long: Glutamate-1-semialdehyde 2,1-aminomutase (430 aa).

Lysine 265 is subject to N6-(pyridoxal phosphate)lysine.

The protein belongs to the class-III pyridoxal-phosphate-dependent aminotransferase family. HemL subfamily. In terms of assembly, homodimer. Requires pyridoxal 5'-phosphate as cofactor.

The protein localises to the cytoplasm. It catalyses the reaction (S)-4-amino-5-oxopentanoate = 5-aminolevulinate. Its pathway is porphyrin-containing compound metabolism; protoporphyrin-IX biosynthesis; 5-aminolevulinate from L-glutamyl-tRNA(Glu): step 2/2. This chain is Glutamate-1-semialdehyde 2,1-aminomutase, found in Shewanella baltica (strain OS223).